A 94-amino-acid chain; its full sequence is Sulfocarbamoylase-1 (94 aa).

As to quaternary structure, homodimer. As to expression, ubiquitous (at protein level). Highest levels of expression in crystalline style followed by digestive gland and mantle.

With respect to regulation, strongly inhibited by the serine proteinase inhibitor AEBSF. Weakly inhibited by the proteinase inhibitors BSF and aprotinin, and by EDTA. Not inhibited by the proteinase inhibitors bestatin, E-64 and leupeptin. Hydrolysis of sulfocarbamoyl esters of paralytic shellfish toxins. Does not hydrolyze the carbamoyl esters of paralytic shellfish toxins. Ester hydrolysis is significantly affected by the stereochemistry of sulfate esters at C-11 of the substrate toxin. This Megangulus venulosus (Japanese bivalve) protein is Sulfocarbamoylase-1.